We begin with the raw amino-acid sequence, 250 residues long: UDP-2,3-diacylglucosamine hydrolase (250 aa).

Residues Asp8, His10, Asp41, Asn79, and His114 each coordinate Mn(2+). 79-80 (NR) serves as a coordination point for substrate. Positions 122, 160, 172, 175, and 203 each coordinate substrate. The Mn(2+) site is built by His203 and His205.

This sequence belongs to the LpxH family. Mn(2+) serves as cofactor.

The protein localises to the cell inner membrane. The catalysed reaction is UDP-2-N,3-O-bis[(3R)-3-hydroxytetradecanoyl]-alpha-D-glucosamine + H2O = 2-N,3-O-bis[(3R)-3-hydroxytetradecanoyl]-alpha-D-glucosaminyl 1-phosphate + UMP + 2 H(+). It participates in glycolipid biosynthesis; lipid IV(A) biosynthesis; lipid IV(A) from (3R)-3-hydroxytetradecanoyl-[acyl-carrier-protein] and UDP-N-acetyl-alpha-D-glucosamine: step 4/6. Hydrolyzes the pyrophosphate bond of UDP-2,3-diacylglucosamine to yield 2,3-diacylglucosamine 1-phosphate (lipid X) and UMP by catalyzing the attack of water at the alpha-P atom. Involved in the biosynthesis of lipid A, a phosphorylated glycolipid that anchors the lipopolysaccharide to the outer membrane of the cell. The sequence is that of UDP-2,3-diacylglucosamine hydrolase from Xylella fastidiosa (strain M23).